A 259-amino-acid polypeptide reads, in one-letter code: GTP cyclohydrolase FolE2 (259 aa).

This sequence belongs to the GTP cyclohydrolase IV family.

The enzyme catalyses GTP + H2O = 7,8-dihydroneopterin 3'-triphosphate + formate + H(+). It participates in cofactor biosynthesis; 7,8-dihydroneopterin triphosphate biosynthesis; 7,8-dihydroneopterin triphosphate from GTP: step 1/1. Functionally, converts GTP to 7,8-dihydroneopterin triphosphate. The polypeptide is GTP cyclohydrolase FolE2 (Halorhodospira halophila (strain DSM 244 / SL1) (Ectothiorhodospira halophila (strain DSM 244 / SL1))).